The sequence spans 315 residues: Olfactory receptor 4A5 (315 aa).

The Extracellular portion of the chain corresponds to 1–23; that stretch reads MRQNNNITEFVLLGFSQDPGVQK. Asn6 is a glycosylation site (N-linked (GlcNAc...) asparagine). The helical transmembrane segment at 24–47 threads the bilayer; that stretch reads ALFVMFLLTYLVTVVGNLLIVVDI. At 48–55 the chain is on the cytoplasmic side; sequence IASPSLGS. The chain crosses the membrane as a helical span at residues 56 to 77; sequence PMYFFLACLSFIDAAYSTTISP. Residues 78-98 lie on the Extracellular side of the membrane; sequence KLIVGLFCDKKTISFQGCMGQ. Cys95 and Cys186 are oxidised to a cystine. The chain crosses the membrane as a helical span at residues 99–118; sequence LFIDHFFGGAEVFLLVVMAC. Over 119 to 137 the chain is Cytoplasmic; that stretch reads DRYVAICKPLHYLTIMNRQ. Residues 138–156 form a helical membrane-spanning segment; sequence VCFLLLVVAMIGGFVHSAF. Topologically, residues 157–192 are extracellular; sequence QIVVYSLPFCGPNVIVHFSCDMHPLLELACTDTYFI. The helical transmembrane segment at 193–216 threads the bilayer; the sequence is GLTVVVNSGAICMVIFNLLLISYG. At 217–232 the chain is on the cytoplasmic side; sequence VILSSLKTYSQEKRGK. A helical transmembrane segment spans residues 233-255; that stretch reads ALSTCSSGSTVVVLFFVPCIFIY. The Extracellular segment spans residues 256–266; the sequence is VRPVSNFPTDK. A helical membrane pass occupies residues 267–286; it reads FMTVFYTIITHMLSPLIYTL. Residues 287 to 315 are Cytoplasmic-facing; sequence RNSEMRNAIEKLLGKKLTIFIIGGVSVLM.

This sequence belongs to the G-protein coupled receptor 1 family.

The protein localises to the cell membrane. Odorant receptor. The polypeptide is Olfactory receptor 4A5 (OR4A5) (Homo sapiens (Human)).